We begin with the raw amino-acid sequence, 605 residues long: Microtubule-associated protein VP10 (605 aa).

In terms of assembly, interacts with VP1.

It is found in the virion. It localises to the host cytoplasm. Its subcellular location is the host cytoskeleton. Minor inner capsid component. Displays NTPase and RNA 5'-triphosphatase (RTPase) activities. May function as a cofactor of polymerase VP1. Associates with microtubules and plays a role in the formation, structural organization and morphology of viral inclusions, where the assembly of cores and the replication of viral RNA occur. This chain is Microtubule-associated protein VP10, found in Colorado tick fever virus (strain USA/Florio N-7180) (CTFV).